The sequence spans 809 residues: PiggyBac transposable element-derived protein 1 (809 aa).

Residues 44-126 (RLRFRHFCYQ…TVLENLETGS (83 aa)) form the SCAN box domain. The tract at residues 170-199 (CEPPQRPQGNPQEVSGPVPHGSAHLQEKNP) is disordered. Lys-218 is covalently cross-linked (Glycyl lysine isopeptide (Lys-Gly) (interchain with G-Cter in SUMO2)). A disordered region spans residues 271–297 (KQETSEEMEQSGEASGKPNRECAPQIP). Residue Ser-360 is modified to Phosphoserine.

The polypeptide is PiggyBac transposable element-derived protein 1 (PGBD1) (Homo sapiens (Human)).